A 438-amino-acid polypeptide reads, in one-letter code: Histidinol dehydrogenase (438 aa).

NAD(+) contacts are provided by Tyr135, Gln193, and Asn216. Ser243, Gln265, and His268 together coordinate substrate. Residues Gln265 and His268 each contribute to the Zn(2+) site. Residues Glu332 and His333 each act as proton acceptor in the active site. Substrate contacts are provided by His333, Asp366, Glu420, and His425. Residue Asp366 coordinates Zn(2+). Residue His425 participates in Zn(2+) binding.

Belongs to the histidinol dehydrogenase family. The cofactor is Zn(2+).

The catalysed reaction is L-histidinol + 2 NAD(+) + H2O = L-histidine + 2 NADH + 3 H(+). The protein operates within amino-acid biosynthesis; L-histidine biosynthesis; L-histidine from 5-phospho-alpha-D-ribose 1-diphosphate: step 9/9. Functionally, catalyzes the sequential NAD-dependent oxidations of L-histidinol to L-histidinaldehyde and then to L-histidine. The sequence is that of Histidinol dehydrogenase from Shewanella oneidensis (strain ATCC 700550 / JCM 31522 / CIP 106686 / LMG 19005 / NCIMB 14063 / MR-1).